Reading from the N-terminus, the 216-residue chain is Protein InaA (216 aa).

It belongs to the protein kinase superfamily. KdkA/RfaP family.

In terms of biological role, may be an environmental sensor responsive to several stimuli, including internal pH, proton motive force, temperature, and possibly other unknown factors. This is Protein InaA (inaA) from Escherichia coli (strain K12).